A 288-amino-acid chain; its full sequence is Ankyrin repeat and SOCS box protein 8 (288 aa).

Ser17 is modified (phosphoserine). 4 ANK repeats span residues 52-81, 85-113, 117-146, and 150-179; these read GTLKPLHCACMVSDADCVELLLEKGAEVNA, YNRTALHYAAEKDEACVEVLLEYGANPNA, NRDTPLHWAAFKNNAECVRALLESGASVNA, and NNDTPLSWAAMKGNLESVSILLDYGAEVRV. One can recognise an SOCS box domain in the interval 235 to 288; it reads QLCEKLTVLCSAPGTLKTLARYAVRRSLGLQYLPDAVKGLPLPASLKEYLLLLE.

It belongs to the ankyrin SOCS box (ASB) family. Interacts with TBK1; this interaction promotes TBK1 proteasomal degradation. Phosphorylated by TBK1. Highest level of expression in skeletal muscle. Also expressed in heart, brain, placenta, liver, kidney and pancreas.

It is found in the cytoplasm. It participates in protein modification; protein ubiquitination. In terms of biological role, may be a substrate-recognition component of a SCF-like ECS (Elongin-Cullin-SOCS-box protein) E3 ubiquitin-protein ligase complex which mediates the ubiquitination and subsequent proteasomal degradation of target proteins. Inhibits IFN-beta production through the IRF3 signaling pathway by targeting TBK1 via 'Lys-48'-linked ubiquitination, leading to its proteasomal degradation. The chain is Ankyrin repeat and SOCS box protein 8 (ASB8) from Homo sapiens (Human).